A 136-amino-acid chain; its full sequence is General odorant-binding protein 57d (136 aa).

The signal sequence occupies residues 1 to 29 (MPEKMSLRLVPHLACIIFILEIQFRIADS). Disulfide bonds link Cys33–Cys70, Cys66–Cys118, and Cys107–Cys127.

The protein belongs to the PBP/GOBP family.

Functionally, present in the aqueous fluid surrounding olfactory sensory dendrites and are thought to aid in the capture and transport of hydrophobic odorants into and through this fluid. In Drosophila melanogaster (Fruit fly), this protein is General odorant-binding protein 57d.